A 250-amino-acid chain; its full sequence is UPF0524 protein C3orf70 homolog (250 aa).

Residues 201–250 (ESCDEDTEEGAELSSEEDYSPESSWEPDECTLLSPSQSDLEVIETIETTV) are disordered. A compositionally biased stretch (acidic residues) spans 202-229 (SCDEDTEEGAELSSEEDYSPESSWEPDE).

This sequence belongs to the UPF0524 family.

Its function is as follows. May play a role in neuronal and neurobehavioral development. The protein is UPF0524 protein C3orf70 homolog of Bos taurus (Bovine).